The chain runs to 355 residues: Peptide chain release factor 1 (355 aa).

Position 233 is an N5-methylglutamine (Q233). The segment at 280–310 (ERRKKEQKRANNRRGQVGSGDRSERIRTYNF) is disordered.

The protein belongs to the prokaryotic/mitochondrial release factor family. Methylated by PrmC. Methylation increases the termination efficiency of RF1.

The protein localises to the cytoplasm. Functionally, peptide chain release factor 1 directs the termination of translation in response to the peptide chain termination codons UAG and UAA. The protein is Peptide chain release factor 1 of Rickettsia canadensis (strain McKiel).